The chain runs to 654 residues: MNIIFLKVPSIFKKLNVGNIKILNVNQNSPSIIVNSNNTKSIKNHNYSSFTNNNNNNNKNQVNLVQNKSILSSSSSYKGNNNNNNKLSYTTSSNNNNNNKIEEIVKSTTVSPFTPLNILHPKLVGEKLYSNDNEANNNQKEFKAEISTLPNGIRVVSKQTHEGVCAIGLYINAGTKYESPQDRGVFNLLEKMTFKETKNNSTSEIIKELEEISMNAMASSSREMINVSLEVLRKDLEFVLSILSDQIKSPTYSEEELREQIEVCIRNYEMITNSSSDQLMTEILMGVAFGDAGLGNLVIATPEQYQNITREKLFDALRKYYVGKNIVISVTGAEHSQVIELVDKYFGDIPFTQKDTPSEDSIDSTITYKGGTDACVAGLIHKNHLKSQLQFLIEKQQKLKQQQQQQQPQPQNSNIDDNDNEEELLNLEIEQTKISIEQLELQQVKESSWIIAFPHSGLSTVAENKDIINGLVLQSLLGGGSSYSTGGPGKGMQSRLNLNVVYSSHRVKNCHAFLFVFNKVSLFGISLTTQSGFLQDGIELVLQELLMLRSSMTQQELERAKRSQKSQILQNLEMRSVQCDDMARHILSFGSYKSPEQICKLIDSVTLDDIKKLISKLAQSNPSVVSIVANENEPILTAEQYNQIVKQNSSTLFK.

Positions 73 to 94 are disordered; it reads SSSSYKGNNNNNNKLSYTTSSN. Residues 381 to 446 adopt a coiled-coil conformation; sequence HKNHLKSQLQ…EQLELQQVKE (66 aa).

The protein belongs to the peptidase M16 family. Heterodimer of alpha and beta subunits, forming the mitochondrial processing protease (MPP) in which subunit alpha is involved in substrate recognition and binding and subunit beta is the catalytic subunit.

The protein resides in the mitochondrion matrix. Functionally, substrate recognition and binding subunit of the essential mitochondrial processing protease (MPP), which cleaves the mitochondrial sequence off newly imported precursors proteins. The chain is Mitochondrial-processing peptidase subunit alpha-1 (mppA1) from Dictyostelium discoideum (Social amoeba).